We begin with the raw amino-acid sequence, 79 residues long: uncharacterized protein (79 aa).

Transmembrane regions (helical) follow at residues 28 to 48 (CIIL…ALLA) and 51 to 71 (VALT…AFTV).

The protein resides in the cell membrane. This is an uncharacterized protein from Methanocaldococcus jannaschii (strain ATCC 43067 / DSM 2661 / JAL-1 / JCM 10045 / NBRC 100440) (Methanococcus jannaschii).